We begin with the raw amino-acid sequence, 379 residues long: Cytochrome b (379 aa).

The next 4 membrane-spanning stretches (helical) occupy residues Phe34–Met54, Trp78–Ile99, Trp114–Leu134, and Phe179–Leu199. Positions 84 and 98 each coordinate heme b. His183 and His197 together coordinate heme b. Residue His202 coordinates a ubiquinone. Transmembrane regions (helical) follow at residues Tyr227–Tyr247, Leu289–His309, Leu321–Gly341, and Phe348–Pro368.

The protein belongs to the cytochrome b family. As to quaternary structure, the cytochrome bc1 complex contains 3 respiratory subunits (MT-CYB, CYC1 and UQCRFS1), 2 core proteins (UQCRC1 and UQCRC2) and probably 6 low-molecular weight proteins. Heme b serves as cofactor.

It localises to the mitochondrion inner membrane. Its function is as follows. Component of the ubiquinol-cytochrome c reductase complex (complex III or cytochrome b-c1 complex) that is part of the mitochondrial respiratory chain. The b-c1 complex mediates electron transfer from ubiquinol to cytochrome c. Contributes to the generation of a proton gradient across the mitochondrial membrane that is then used for ATP synthesis. In Glyptemys muhlenbergii (Bog turtle), this protein is Cytochrome b (MT-CYB).